Reading from the N-terminus, the 576-residue chain is Eukaryotic translation initiation factor 3 subunit L (576 aa).

The PCI domain maps to 330–536 (DAIRVFANIL…IHIADTKVAR (207 aa)).

Belongs to the eIF-3 subunit L family. In terms of assembly, component of the eukaryotic translation initiation factor 3 (eIF-3) complex, which is composed of 13 subunits: eif3a, eif3b, eif3c, eif3d, eif3e, eif3f, eif3g, eif3h, eif3i, eif3j, eif3k, eif3l and eif3m.

The protein resides in the cytoplasm. In terms of biological role, component of the eukaryotic translation initiation factor 3 (eIF-3) complex, which is involved in protein synthesis of a specialized repertoire of mRNAs and, together with other initiation factors, stimulates binding of mRNA and methionyl-tRNAi to the 40S ribosome. The eIF-3 complex specifically targets and initiates translation of a subset of mRNAs involved in cell proliferation. The protein is Eukaryotic translation initiation factor 3 subunit L (eif3l) of Danio rerio (Zebrafish).